A 293-amino-acid polypeptide reads, in one-letter code: PHD finger protein 11A (293 aa).

The segment at 25 to 61 adopts a C2HC pre-PHD-type zinc-finger fold; the sequence is KRTCALCPEGHEWSQIYFSPSANIVAHENCLLYSSGL. Residues 91 to 143 form a PHD-type; degenerate zinc finger; it reads LKCSFCKNKGATMGYDLQSCTKNYHLSCAMEDHAILQVDEDHGTYKLFCQKHA. The tract at residues 262–293 is disordered; sequence SSSTSGSLLPPEDHQVRCQESPEVQAGSGDSL.

It is found in the nucleus. The sequence is that of PHD finger protein 11A (Phf11a) from Mus musculus (Mouse).